The sequence spans 1789 residues: Protein sprint (1789 aa).

Disordered stretches follow at residues 53–120 (TTAN…AHPP), 140–190 (TTTA…DLAN), 218–237 (PLWN…HPTG), 261–317 (QRMH…QAGL), 329–378 (LNNN…DADD), and 401–460 (RRSR…PCDL). Positions 82-114 (SINNNKNNNISNKNNNNNNNNNNNINNNNNNNN) are enriched in low complexity. Positions 140–149 (TTTANQLQQQ) are enriched in polar residues. Over residues 176–185 (PSEEDGDTDA) the composition is skewed to acidic residues. A compositionally biased stretch (polar residues) spans 223–233 (RNGNGSTTTHC). Over residues 295 to 317 (NNNNINNNHNGQQSQKSQQQAGL) the composition is skewed to low complexity. The segment covering 337–361 (QPGSMTPASNRTGLDSNQNQKQNLN) has biased composition (polar residues). A compositionally biased stretch (low complexity) spans 409-418 (QSRTSLVSSS). A compositionally biased stretch (acidic residues) spans 428-445 (TSSEDDEEEPVEAEDEGE). Residues 473-566 (WFLPGIQRSG…ELPVQLMLPR (94 aa)) enclose the SH2 domain. Disordered stretches follow at residues 632 to 689 (FFSD…SGGQ), 744 to 787 (TAPE…SANG), 852 to 918 (GECK…ILES), 969 to 1006 (DLLA…QSLL), 1040 to 1067 (AAED…QGSP), 1094 to 1123 (RSQM…MLQP), and 1138 to 1160 (PKPK…KRAR). Positions 639–649 (KPPPTGAPPLP) are enriched in pro residues. Over residues 671 to 686 (TPSDTTNSSLSSFTTS) the composition is skewed to low complexity. Residues 857-868 (TLSSQGSSSNDS) are compositionally biased toward polar residues. The segment covering 903–914 (AGKESQHYKESD) has biased composition (basic and acidic residues). Residues 974–984 (TPSTPTPTQQS) are compositionally biased toward low complexity. Composition is skewed to polar residues over residues 994 to 1006 (TATP…QSLL) and 1048 to 1065 (TTPT…SKQG). Residues 1143 to 1154 (SQQQQQSQQQQQ) show a composition bias toward low complexity. The 143-residue stretch at 1531-1673 (RSEDIQLLAQ…LKTFMASEGE (143 aa)) folds into the VPS9 domain. The Ras-associating domain occupies 1689–1777 (CSSVLRVIIP…CMLAYKRIDA (89 aa)).

It belongs to the RIN (Ras interaction/interference) family. As to expression, in late cellular blastoderm embryos, it is expressed in the posterior end. Then, as development proceeds, it is expressed in the developing midgut, amnioserosa and in a specific subset of CNS neurons. Isoform 1 is expressed earlier in developing midgut and amnioserosa, but is not expressed in the CNS.

In terms of biological role, potential Ras effector protein. May function as a guanine nucleotide exchange (GEF), by exchanging bound GDP for free GTP. This chain is Protein sprint (spri), found in Drosophila melanogaster (Fruit fly).